The sequence spans 174 residues: Crossover junction endodeoxyribonuclease RuvC (174 aa).

Active-site residues include aspartate 8, glutamate 69, and aspartate 141. Mg(2+)-binding residues include aspartate 8, glutamate 69, and aspartate 141.

Belongs to the RuvC family. Homodimer which binds Holliday junction (HJ) DNA. The HJ becomes 2-fold symmetrical on binding to RuvC with unstacked arms; it has a different conformation from HJ DNA in complex with RuvA. In the full resolvosome a probable DNA-RuvA(4)-RuvB(12)-RuvC(2) complex forms which resolves the HJ. The cofactor is Mg(2+).

It is found in the cytoplasm. It catalyses the reaction Endonucleolytic cleavage at a junction such as a reciprocal single-stranded crossover between two homologous DNA duplexes (Holliday junction).. In terms of biological role, the RuvA-RuvB-RuvC complex processes Holliday junction (HJ) DNA during genetic recombination and DNA repair. Endonuclease that resolves HJ intermediates. Cleaves cruciform DNA by making single-stranded nicks across the HJ at symmetrical positions within the homologous arms, yielding a 5'-phosphate and a 3'-hydroxyl group; requires a central core of homology in the junction. The consensus cleavage sequence is 5'-(A/T)TT(C/G)-3'. Cleavage occurs on the 3'-side of the TT dinucleotide at the point of strand exchange. HJ branch migration catalyzed by RuvA-RuvB allows RuvC to scan DNA until it finds its consensus sequence, where it cleaves and resolves the cruciform DNA. The protein is Crossover junction endodeoxyribonuclease RuvC of Xanthomonas campestris pv. campestris (strain 8004).